Reading from the N-terminus, the 559-residue chain is Cation/calcium exchanger 2 (559 aa).

Helical transmembrane passes span 10–30 (FGYLTVTFLLVISCLLLGFFT), 86–106 (GFPILGQFLLFLWLLLLFYLL), 131–151 (VAGVTLLSLGNGAPDLFASLV), 167–187 (TVVGGSGFVTCVVVGIISISL), 203–223 (ICFFCAAIGSLALILVYGKIN), 224–244 (FWGALGFCSLYAVYVAFVVLS), 331–351 (WSKPLAVASVTFAPVLLSFLW), 362–382 (AGVVYLIGCLIGIALGFIAGA), 393–413 (WLLPWLAGGFVMSMTWSYISA), 416–436 (LVALLTSLGYIFGVSPSILGL), 480–500 (FALGISLVGCAWEAYPLSIVI), 506–526 (LLESLGFLVAGLVWSFLVLFS), and 531–551 (LGGVMGIGLLVIYLASLSLRI).

Belongs to the Ca(2+):cation antiporter (CaCA) (TC 2.A.19) family. Cation/calcium exchanger (CCX) subfamily.

The protein resides in the membrane. Membrane-localized H(+)-dependent K(+) and Na(+) transporter. The chain is Cation/calcium exchanger 2 (CCX2) from Arabidopsis thaliana (Mouse-ear cress).